The chain runs to 93 residues: Putative regulatory protein LA_2599 (93 aa).

It belongs to the RemA family.

The chain is Putative regulatory protein LA_2599 from Leptospira interrogans serogroup Icterohaemorrhagiae serovar Lai (strain 56601).